The following is a 102-amino-acid chain: NADH-quinone oxidoreductase subunit K (102 aa).

3 helical membrane passes run 5–25, 30–50, and 62–82; these read LTQYLLVAAILFTIGVAGIIL, IIIILMSVELILLSVNLNLVA, and IFALFILTVAAAEAAIGLAIL.

It belongs to the complex I subunit 4L family. As to quaternary structure, NDH-1 is composed of 14 different subunits. Subunits NuoA, H, J, K, L, M, N constitute the membrane sector of the complex.

It is found in the cell inner membrane. It carries out the reaction a quinone + NADH + 5 H(+)(in) = a quinol + NAD(+) + 4 H(+)(out). Its function is as follows. NDH-1 shuttles electrons from NADH, via FMN and iron-sulfur (Fe-S) centers, to quinones in the respiratory chain. The immediate electron acceptor for the enzyme in this species is believed to be ubiquinone. Couples the redox reaction to proton translocation (for every two electrons transferred, four hydrogen ions are translocated across the cytoplasmic membrane), and thus conserves the redox energy in a proton gradient. The chain is NADH-quinone oxidoreductase subunit K from Beijerinckia indica subsp. indica (strain ATCC 9039 / DSM 1715 / NCIMB 8712).